Consider the following 1307-residue polypeptide: Contactin-associated protein like 5-3 (1307 aa).

The N-terminal stretch at 1–24 is a signal peptide; that stretch reads MDFVPRLNSVLTLVLSGLWHFGLT. Topologically, residues 25–1238 are extracellular; sequence ATNCDNCDDP…PLTNAVLSDS (1214 aa). Positions 31-175 constitute an F5/8 type C domain; sequence CDDPLASFLS…IGMRMEVYGC (145 aa). Cysteines 31 and 175 form a disulfide. Laminin G-like domains are found at residues 181 to 361 and 368 to 545; these read VADF…TFSC and PITF…IDLC. The N-linked (GlcNAc...) asparagine glycan is linked to N283. An intrachain disulfide couples C330 to C361. N497 is a glycosylation site (N-linked (GlcNAc...) asparagine). Cystine bridges form between C513–C545, C551–C562, C556–C571, and C573–C583. Residues 547–584 form the EGF-like 1 domain; it reads IKDRCLPNYCEHGGHCVQTWTTFYCNCSNTGYTGATCH. The 208-residue stretch at 585-792 folds into the Fibrinogen C-terminal domain; it reads DSIYEQSCEV…LRCYGDRHFW (208 aa). 3 N-linked (GlcNAc...) asparagine glycosylation sites follow: N600, N624, and N637. The region spanning 793–958 is the Laminin G-like 3 domain; sequence NAVSFSTEAS…MVTSGVRPGC (166 aa). Intrachain disulfides connect C931–C958, C962–C975, C969–C984, C986–C996, and C1165–C1200. Positions 959 to 997 constitute an EGF-like 2 domain; sequence PGHCSSYGNNCHNGGKCVEKHNSYSCDCTKSPYEGPFCQ. The Laminin G-like 4 domain occupies 1019-1200; it reads PVSKNTSTSS…VQGSLREFSC (182 aa). Residues 1239–1259 form a helical membrane-spanning segment; that stretch reads AVIGGVIAVVTFITFCVIGIM. The Cytoplasmic portion of the chain corresponds to 1260–1307; it reads TRFLYQHKQSHCTSQKKEKEYSENLDSSFRHDIDLQSTTSKCKREYFI.

It belongs to the neurexin family.

It localises to the membrane. Its function is as follows. May play a role in the correct development and proper functioning of the peripheral and central nervous system and be involved in cell adhesion and intercellular communication. The polypeptide is Contactin-associated protein like 5-3 (Cntnap5c) (Rattus norvegicus (Rat)).